A 68-amino-acid chain; its full sequence is Large ribosomal subunit protein bL31 (68 aa).

Residues cysteine 17, cysteine 19, cysteine 37, and cysteine 40 each coordinate Zn(2+).

It belongs to the bacterial ribosomal protein bL31 family. Type A subfamily. In terms of assembly, part of the 50S ribosomal subunit. Zn(2+) is required as a cofactor.

Its function is as follows. Binds the 23S rRNA. This Clostridium perfringens (strain ATCC 13124 / DSM 756 / JCM 1290 / NCIMB 6125 / NCTC 8237 / Type A) protein is Large ribosomal subunit protein bL31.